The following is a 289-amino-acid chain: ATP synthase gamma chain (289 aa).

The protein belongs to the ATPase gamma chain family. F-type ATPases have 2 components, CF(1) - the catalytic core - and CF(0) - the membrane proton channel. CF(1) has five subunits: alpha(3), beta(3), gamma(1), delta(1), epsilon(1). CF(0) has three main subunits: a, b and c.

It is found in the cell inner membrane. Produces ATP from ADP in the presence of a proton gradient across the membrane. The gamma chain is believed to be important in regulating ATPase activity and the flow of protons through the CF(0) complex. The polypeptide is ATP synthase gamma chain (Polynucleobacter necessarius subsp. necessarius (strain STIR1)).